Reading from the N-terminus, the 307-residue chain is Cyclooctat-9-en-7-ol synthase (307 aa).

Positions 110, 220, 224, and 228 each coordinate Mg(2+). Residues 110–113 (DDMD) carry the DDXXD motif; degenerate motif. An NSE/DTE motif motif is present at residues 220–228 (NDFYSYDRE).

This sequence belongs to the terpene synthase family. In terms of assembly, homodimer. The cofactor is Mg(2+).

It carries out the reaction geranylgeranyl diphosphate + H2O = cyclooctat-9-en-7-ol + diphosphate. Catalyzes the cyclization of the linear isoprenoid intermediate geranylgeranyl diphosphate to tricycclic cyclooctat-9-en-7-ol in the cyclooctatin biosynthesis pathway. Cyclooctatin is a potent inhibitor of lysophospholipase. The chain is Cyclooctat-9-en-7-ol synthase from Streptomyces melanosporofaciens.